The sequence spans 342 residues: Ketol-acid reductoisomerase (NADP(+)) (342 aa).

Residues 2–182 enclose the KARI N-terminal Rossmann domain; sequence AKIYYDDDAD…GGLRAGGIET (181 aa). NADP(+) is bound by residues 25 to 28, arginine 48, serine 51, serine 53, and 83 to 86; these read YGSQ and DQNQ. Residue histidine 108 is part of the active site. Glycine 134 provides a ligand contact to NADP(+). One can recognise a KARI C-terminal knotted domain in the interval 183 to 328; the sequence is SFREETETDL…KELRKMYSWL (146 aa). Residues aspartate 191, glutamate 195, glutamate 227, and glutamate 231 each contribute to the Mg(2+) site. Serine 252 lines the substrate pocket.

The protein belongs to the ketol-acid reductoisomerase family. It depends on Mg(2+) as a cofactor.

It carries out the reaction (2R)-2,3-dihydroxy-3-methylbutanoate + NADP(+) = (2S)-2-acetolactate + NADPH + H(+). The enzyme catalyses (2R,3R)-2,3-dihydroxy-3-methylpentanoate + NADP(+) = (S)-2-ethyl-2-hydroxy-3-oxobutanoate + NADPH + H(+). It participates in amino-acid biosynthesis; L-isoleucine biosynthesis; L-isoleucine from 2-oxobutanoate: step 2/4. The protein operates within amino-acid biosynthesis; L-valine biosynthesis; L-valine from pyruvate: step 2/4. Its function is as follows. Involved in the biosynthesis of branched-chain amino acids (BCAA). Catalyzes an alkyl-migration followed by a ketol-acid reduction of (S)-2-acetolactate (S2AL) to yield (R)-2,3-dihydroxy-isovalerate. In the isomerase reaction, S2AL is rearranged via a Mg-dependent methyl migration to produce 3-hydroxy-3-methyl-2-ketobutyrate (HMKB). In the reductase reaction, this 2-ketoacid undergoes a metal-dependent reduction by NADPH to yield (R)-2,3-dihydroxy-isovalerate. The protein is Ketol-acid reductoisomerase (NADP(+)) of Cutibacterium acnes (strain DSM 16379 / KPA171202) (Propionibacterium acnes).